We begin with the raw amino-acid sequence, 184 residues long: Oocyte-secreted protein 4A (184 aa).

An N-terminal signal peptide occupies residues 1–19; sequence MKISCVLGKLLMLFELIHG. Residue asparagine 128 is glycosylated (N-linked (GlcNAc...) asparagine).

Belongs to the PLAC1 family.

It is found in the secreted. In Homo sapiens (Human), this protein is Oocyte-secreted protein 4A.